Here is a 267-residue protein sequence, read N- to C-terminus: tRNA pseudouridine synthase A (267 aa).

The active-site Nucleophile is the Asp-55. Tyr-111 lines the substrate pocket.

This sequence belongs to the tRNA pseudouridine synthase TruA family.

It carries out the reaction uridine(38/39/40) in tRNA = pseudouridine(38/39/40) in tRNA. Formation of pseudouridine at positions 38, 39 and 40 in the anticodon stem and loop of transfer RNAs. The polypeptide is tRNA pseudouridine synthase A (Thermococcus onnurineus (strain NA1)).